A 426-amino-acid polypeptide reads, in one-letter code: Chromatin structure-remodeling complex subunit SFH1 (426 aa).

The residue at position 78 (Ser-78) is a Phosphoserine. An interaction with STH1 region spans residues 201 to 242 (AIMIPITLDIEHMGHTIKDQFLWNYNDDSISPEEFASIYCKD).

This sequence belongs to the SNF5 family. As to quaternary structure, interacts directly with STH1. Component of the two forms of the RSC complex composed of at least either RSC1 or RSC2, and ARP7, ARP9, LDB7, NPL6, RSC3, RSC30, RSC4, RSC58, RSC6, RSC8, RSC9, SFH1, STH1, HTL1 and probably RTT102. The complexes interact with histone and histone variant components of centromeric chromatin. Phosphorylated in the G1 phase.

It is found in the nucleus. Its function is as follows. Component of the chromatin structure-remodeling complex (RSC), which is involved in transcription regulation and nucleosome positioning. RSC is responsible for the transfer of a histone octamer from a nucleosome core particle to naked DNA. The reaction requires ATP and involves an activated RSC-nucleosome intermediate. Remodeling reaction also involves DNA translocation, DNA twist and conformational change. As a reconfigurer of centromeric and flanking nucleosomes, RSC complex is required both for proper kinetochore function in chromosome segregation and, via a PKC1-dependent signaling pathway, for organization of the cellular cytoskeleton. This subunit is essential for mitotic growth and required for cell cycle progression. The protein is Chromatin structure-remodeling complex subunit SFH1 (SFH1) of Saccharomyces cerevisiae (strain ATCC 204508 / S288c) (Baker's yeast).